An 86-amino-acid chain; its full sequence is MANIKSQQKRILTNERRRLRNKSVKSSLHTAVRGFREAVESGDKEKAGELLLATSRKLDKAASKGVIHKNQAANRKSALARALNKI.

It belongs to the bacterial ribosomal protein bS20 family.

Binds directly to 16S ribosomal RNA. The sequence is that of Small ribosomal subunit protein bS20 from Mycolicibacterium gilvum (strain PYR-GCK) (Mycobacterium gilvum (strain PYR-GCK)).